Reading from the N-terminus, the 224-residue chain is Ribose-5-phosphate isomerase A (224 aa).

Substrate is bound by residues 32–35 (TGST), 85–88 (DGAD), and 98–101 (KGGG). Catalysis depends on Glu107, which acts as the Proton acceptor. Residue Lys125 coordinates substrate.

This sequence belongs to the ribose 5-phosphate isomerase family. As to quaternary structure, homodimer.

It catalyses the reaction aldehydo-D-ribose 5-phosphate = D-ribulose 5-phosphate. Its pathway is carbohydrate degradation; pentose phosphate pathway; D-ribose 5-phosphate from D-ribulose 5-phosphate (non-oxidative stage): step 1/1. Functionally, catalyzes the reversible conversion of ribose-5-phosphate to ribulose 5-phosphate. The chain is Ribose-5-phosphate isomerase A from Pseudomonas putida (strain ATCC 700007 / DSM 6899 / JCM 31910 / BCRC 17059 / LMG 24140 / F1).